The following is a 166-amino-acid chain: Large ribosomal subunit protein uL10 (166 aa).

It belongs to the universal ribosomal protein uL10 family. In terms of assembly, part of the ribosomal stalk of the 50S ribosomal subunit. The N-terminus interacts with L11 and the large rRNA to form the base of the stalk. The C-terminus forms an elongated spine to which L12 dimers bind in a sequential fashion forming a multimeric L10(L12)X complex.

Functionally, forms part of the ribosomal stalk, playing a central role in the interaction of the ribosome with GTP-bound translation factors. This chain is Large ribosomal subunit protein uL10 (rplJ), found in Neisseria meningitidis serogroup A / serotype 4A (strain DSM 15465 / Z2491).